Reading from the N-terminus, the 690-residue chain is Translation initiation factor IF-2 (690 aa).

Positions 178 to 346 (PRPPVVTVMG…MILLVAEMNE (169 aa)) constitute a tr-type G domain. The tract at residues 187–194 (GHVDHGKT) is G1. Position 187–194 (187–194 (GHVDHGKT)) interacts with GTP. The G2 stretch occupies residues 212–216 (GITQS). The interval 233–236 (DTPG) is G3. GTP is bound by residues 233–237 (DTPGH) and 287–290 (NKID). A G4 region spans residues 287–290 (NKID). A G5 region spans residues 324–326 (SAR).

The protein belongs to the TRAFAC class translation factor GTPase superfamily. Classic translation factor GTPase family. IF-2 subfamily.

It localises to the cytoplasm. One of the essential components for the initiation of protein synthesis. Protects formylmethionyl-tRNA from spontaneous hydrolysis and promotes its binding to the 30S ribosomal subunits. Also involved in the hydrolysis of GTP during the formation of the 70S ribosomal complex. In Thermotoga sp. (strain RQ2), this protein is Translation initiation factor IF-2.